We begin with the raw amino-acid sequence, 114 residues long: T cell receptor beta variable 4-2 (114 aa).

Positions 1–21 (MGCRLLCCAVLCLLGAVPMET) are cleaved as a signal peptide. The Ig-like domain occupies 22-114 (GVTQTPRHLV…SALYLCASSQ (93 aa)). The cysteines at positions 42 and 110 are disulfide-linked. 2 N-linked (GlcNAc...) asparagine glycosylation sites follow: Asn-76 and Asn-89.

Alpha-beta TR is a heterodimer composed of an alpha and beta chain; disulfide-linked. The alpha-beta TR is associated with the transmembrane signaling CD3 coreceptor proteins to form the TR-CD3 (TcR or TCR). The assembly of alpha-beta TR heterodimers with CD3 occurs in the endoplasmic reticulum where a single alpha-beta TR heterodimer associates with one CD3D-CD3E heterodimer, one CD3G-CD3E heterodimer and one CD247 homodimer forming a stable octameric structure. CD3D-CD3E and CD3G-CD3E heterodimers preferentially associate with TR alpha and TR beta chains, respectively. The association of the CD247 homodimer is the last step of TcR assembly in the endoplasmic reticulum and is required for transport to the cell surface.

The protein resides in the cell membrane. In terms of biological role, v region of the variable domain of T cell receptor (TR) beta chain that participates in the antigen recognition. Alpha-beta T cell receptors are antigen specific receptors which are essential to the immune response and are present on the cell surface of T lymphocytes. Recognize peptide-major histocompatibility (MH) (pMH) complexes that are displayed by antigen presenting cells (APC), a prerequisite for efficient T cell adaptive immunity against pathogens. Binding of alpha-beta TR to pMH complex initiates TR-CD3 clustering on the cell surface and intracellular activation of LCK that phosphorylates the ITAM motifs of CD3G, CD3D, CD3E and CD247 enabling the recruitment of ZAP70. In turn ZAP70 phosphorylates LAT, which recruits numerous signaling molecules to form the LAT signalosome. The LAT signalosome propagates signal branching to three major signaling pathways, the calcium, the mitogen-activated protein kinase (MAPK) kinase and the nuclear factor NF-kappa-B (NF-kB) pathways, leading to the mobilization of transcription factors that are critical for gene expression and essential for T cell growth and differentiation. The T cell repertoire is generated in the thymus, by V-(D)-J rearrangement. This repertoire is then shaped by intrathymic selection events to generate a peripheral T cell pool of self-MH restricted, non-autoaggressive T cells. Post-thymic interaction of alpha-beta TR with the pMH complexes shapes TR structural and functional avidity. In Homo sapiens (Human), this protein is T cell receptor beta variable 4-2.